The sequence spans 232 residues: Sugar fermentation stimulation protein homolog (232 aa).

It belongs to the SfsA family.

This is Sugar fermentation stimulation protein homolog from Pelagibacter ubique (strain HTCC1062).